A 400-amino-acid chain; its full sequence is Probable peptidoglycan D,D-transpeptidase PenA (400 aa).

A disordered region spans residues 1–21 (NIDGKGQEGLELSREDSLRGE). Residue serine 128 is the Acyl-ester intermediate of the active site.

It belongs to the transpeptidase family. FtsI subfamily.

The protein resides in the cell inner membrane. The enzyme catalyses Preferential cleavage: (Ac)2-L-Lys-D-Ala-|-D-Ala. Also transpeptidation of peptidyl-alanyl moieties that are N-acyl substituents of D-alanine.. The protein operates within cell wall biogenesis; peptidoglycan biosynthesis. In terms of biological role, catalyzes cross-linking of the peptidoglycan cell wall at the division septum. The sequence is that of Probable peptidoglycan D,D-transpeptidase PenA from Neisseria flavescens.